We begin with the raw amino-acid sequence, 290 residues long: ATP synthase gamma chain (290 aa).

Belongs to the ATPase gamma chain family. In terms of assembly, F-type ATPases have 2 components, CF(1) - the catalytic core - and CF(0) - the membrane proton channel. CF(1) has five subunits: alpha(3), beta(3), gamma(1), delta(1), epsilon(1). CF(0) has three main subunits: a, b and c.

It localises to the cell inner membrane. In terms of biological role, produces ATP from ADP in the presence of a proton gradient across the membrane. The gamma chain is believed to be important in regulating ATPase activity and the flow of protons through the CF(0) complex. This chain is ATP synthase gamma chain, found in Anaeromyxobacter sp. (strain K).